Consider the following 378-residue polypeptide: Protein KlaB (378 aa).

It belongs to the TelA family.

Belongs to the kla operon, which is associated with cryptic tellurite resistance, and IncW plasmid fertility inhibition. The polypeptide is Protein KlaB (klaB) (Escherichia coli).